A 454-amino-acid polypeptide reads, in one-letter code: Chromosomal replication initiator protein DnaA (454 aa).

Residues 1-81 (MNNSLWQQCA…PNVVLKVGEA (81 aa)) are domain I, interacts with DnaA modulators. Positions 79 to 110 (GEASPTQRDSGSPQRAAATRRKTPNFSSGNTD) are disordered. A domain II region spans residues 81-117 (ASPTQRDSGSPQRAAATRRKTPNFSSGNTDVEVPFES). The span at 82-91 (SPTQRDSGSP) shows a compositional bias: polar residues. Residues 118–334 (NIHPEYTFDN…GALNRVVANV (217 aa)) form a domain III, AAA+ region region. Residues Gly162, Gly164, Lys165, and Thr166 each coordinate ATP. The interval 335 to 454 (QLTGRPITID…YRNLIRTLSS (120 aa)) is domain IV, binds dsDNA.

The protein belongs to the DnaA family. In terms of assembly, oligomerizes as a right-handed, spiral filament on DNA at oriC.

It localises to the cytoplasm. Its function is as follows. Plays an essential role in the initiation and regulation of chromosomal replication. ATP-DnaA binds to the origin of replication (oriC) to initiate formation of the DNA replication initiation complex once per cell cycle. Binds the DnaA box (a 9 base pair repeat at the origin) and separates the double-stranded (ds)DNA. Forms a right-handed helical filament on oriC DNA; dsDNA binds to the exterior of the filament while single-stranded (ss)DNA is stabiized in the filament's interior. The ATP-DnaA-oriC complex binds and stabilizes one strand of the AT-rich DNA unwinding element (DUE), permitting loading of DNA polymerase. After initiation quickly degrades to an ADP-DnaA complex that is not apt for DNA replication. Binds acidic phospholipids. This is Chromosomal replication initiator protein DnaA from Idiomarina loihiensis (strain ATCC BAA-735 / DSM 15497 / L2-TR).